Consider the following 536-residue polypeptide: Proto-oncogene tyrosine-protein kinase Yrk (536 aa).

Glycine 2 carries the N-myristoyl glycine lipid modification. 2 S-palmitoyl cysteine lipidation sites follow: cysteine 3 and cysteine 6. The disordered stretch occupies residues 10–36 (ISGKGQGGSGTGTPAHPPSQYDPDPTQ). The SH3 domain occupies 81–142 (GGVTLFIALY…PSNYVAPVDS (62 aa)). Positions 148-245 (WYFGKIGRKD…GLCCRLAVPC (98 aa)) constitute an SH2 domain. Residues 270–523 (LQLLQKLGNG…YLQSFLEDYF (254 aa)) enclose the Protein kinase domain. ATP contacts are provided by residues 276 to 284 (LGNGQFGEV) and lysine 298. Catalysis depends on aspartate 389, which acts as the Proton acceptor. Tyrosine 419 is subject to Phosphotyrosine; by autocatalysis. Position 530 is a phosphotyrosine (tyrosine 530).

Belongs to the protein kinase superfamily. Tyr protein kinase family. SRC subfamily. In terms of processing, phosphorylated. As to expression, there are elevated levels of this protein in neural and hematopoietic tissues.

It catalyses the reaction L-tyrosyl-[protein] + ATP = O-phospho-L-tyrosyl-[protein] + ADP + H(+). Functionally, may participate in signaling pathways. This chain is Proto-oncogene tyrosine-protein kinase Yrk (YRK), found in Gallus gallus (Chicken).